Reading from the N-terminus, the 115-residue chain is NAD(P)H-quinone oxidoreductase subunit M (115 aa).

This sequence belongs to the complex I NdhM subunit family. NDH-1 can be composed of about 15 different subunits; different subcomplexes with different compositions have been identified which probably have different functions.

The protein localises to the cellular thylakoid membrane. It catalyses the reaction a plastoquinone + NADH + (n+1) H(+)(in) = a plastoquinol + NAD(+) + n H(+)(out). The catalysed reaction is a plastoquinone + NADPH + (n+1) H(+)(in) = a plastoquinol + NADP(+) + n H(+)(out). NDH-1 shuttles electrons from an unknown electron donor, via FMN and iron-sulfur (Fe-S) centers, to quinones in the respiratory and/or the photosynthetic chain. The immediate electron acceptor for the enzyme in this species is believed to be plastoquinone. Couples the redox reaction to proton translocation, and thus conserves the redox energy in a proton gradient. Cyanobacterial NDH-1 also plays a role in inorganic carbon-concentration. This chain is NAD(P)H-quinone oxidoreductase subunit M, found in Prochlorococcus marinus (strain AS9601).